The sequence spans 87 residues: Translation initiation factor IF-1 2 (87 aa).

The S1-like domain occupies 1 to 72 (MAKEELLEMQ…SKGRITFRHI (72 aa)).

This sequence belongs to the IF-1 family. In terms of assembly, component of the 30S ribosomal translation pre-initiation complex which assembles on the 30S ribosome in the order IF-2 and IF-3, IF-1 and N-formylmethionyl-tRNA(fMet); mRNA recruitment can occur at any time during PIC assembly.

The protein localises to the cytoplasm. In terms of biological role, one of the essential components for the initiation of protein synthesis. Stabilizes the binding of IF-2 and IF-3 on the 30S subunit to which N-formylmethionyl-tRNA(fMet) subsequently binds. Helps modulate mRNA selection, yielding the 30S pre-initiation complex (PIC). Upon addition of the 50S ribosomal subunit IF-1, IF-2 and IF-3 are released leaving the mature 70S translation initiation complex. This Dechloromonas aromatica (strain RCB) protein is Translation initiation factor IF-1 2.